Reading from the N-terminus, the 335-residue chain is Tetraacyldisaccharide 4'-kinase (335 aa).

58–65 contributes to the ATP binding site; that stretch reads TAGGSGKT.

The protein belongs to the LpxK family.

The enzyme catalyses a lipid A disaccharide + ATP = a lipid IVA + ADP + H(+). Its pathway is glycolipid biosynthesis; lipid IV(A) biosynthesis; lipid IV(A) from (3R)-3-hydroxytetradecanoyl-[acyl-carrier-protein] and UDP-N-acetyl-alpha-D-glucosamine: step 6/6. Functionally, transfers the gamma-phosphate of ATP to the 4'-position of a tetraacyldisaccharide 1-phosphate intermediate (termed DS-1-P) to form tetraacyldisaccharide 1,4'-bis-phosphate (lipid IVA). In Shewanella frigidimarina (strain NCIMB 400), this protein is Tetraacyldisaccharide 4'-kinase.